The sequence spans 95 residues: UPF0235 protein Pcar_0617 (95 aa).

Belongs to the UPF0235 family.

The polypeptide is UPF0235 protein Pcar_0617 (Syntrophotalea carbinolica (strain DSM 2380 / NBRC 103641 / GraBd1) (Pelobacter carbinolicus)).